A 163-amino-acid chain; its full sequence is MGIDPGLTRCGLSVVQAGKGRSVIPVAVGVVRTPPHAELSQRLLELSEAVNSWIDEYQPDVVAIERIFERGNVSTVMNTAHGVGVLVLAAAQRGLPVHMYTPSEVKKAISGNGRADKKQMTAMITRILGLVEAPKPADAADALALAVCHCWRAPMLAIHNSQR.

Active-site residues include D4, E65, and D138. Mg(2+) contacts are provided by D4, E65, and D138.

Belongs to the RuvC family. Homodimer which binds Holliday junction (HJ) DNA. The HJ becomes 2-fold symmetrical on binding to RuvC with unstacked arms; it has a different conformation from HJ DNA in complex with RuvA. In the full resolvosome a probable DNA-RuvA(4)-RuvB(12)-RuvC(2) complex forms which resolves the HJ. It depends on Mg(2+) as a cofactor.

The protein resides in the cytoplasm. It carries out the reaction Endonucleolytic cleavage at a junction such as a reciprocal single-stranded crossover between two homologous DNA duplexes (Holliday junction).. In terms of biological role, the RuvA-RuvB-RuvC complex processes Holliday junction (HJ) DNA during genetic recombination and DNA repair. Endonuclease that resolves HJ intermediates. Cleaves cruciform DNA by making single-stranded nicks across the HJ at symmetrical positions within the homologous arms, yielding a 5'-phosphate and a 3'-hydroxyl group; requires a central core of homology in the junction. The consensus cleavage sequence is 5'-(A/T)TT(C/G)-3'. Cleavage occurs on the 3'-side of the TT dinucleotide at the point of strand exchange. HJ branch migration catalyzed by RuvA-RuvB allows RuvC to scan DNA until it finds its consensus sequence, where it cleaves and resolves the cruciform DNA. The chain is Crossover junction endodeoxyribonuclease RuvC from Corynebacterium diphtheriae (strain ATCC 700971 / NCTC 13129 / Biotype gravis).